Consider the following 526-residue polypeptide: Choline/ethanolamine transporter FLVCR2 (526 aa).

The disordered stretch occupies residues 1-70 (MVNEGPNQEE…PSGLAHPSSS (70 aa)). Topologically, residues 1–76 (MVNEGPNQEE…PSSSGPEDLS (76 aa)) are cytoplasmic. Position 1 to 84 (1 to 84 (MVNEGPNQEE…LSVIKVSRRR (84 aa))) interacts with heme b. Tandem repeats lie at residues 25–30 (PSVSVH), 31–36 (PSVSVH), 37–42 (PSVSIN), 43–48 (PSVSVH), and 49–54 (PSSSAH). The segment covering 25–56 (PSVSVHPSVSVHPSVSINPSVSVHPSSSAHPS) has biased composition (low complexity). The 8 X 6 AA tandem repeats of P-S-[VS]-S-[VIAG]-[HNP] stretch occupies residues 25–72 (PSVSVHPSVSVHPSVSINPSVSVHPSSSAHPSALAQPSGLAHPSSSGP). A 6; approximate repeat occupies 55–60 (PSALAQ). The 7; approximate repeat unit spans residues 61-66 (PSGLAH). Repeat unit 8 spans residues 67–72 (PSSSGP). Residues 77 to 101 (VIKVSRRRWAVVLVFSCYSMCNSFQ) traverse the membrane as a helical segment. Asn-98 and Trp-102 together coordinate choline. Over 102–119 (WIQYGSINNIFMHFYGVS) the chain is Extracellular. Residues 120–147 (AFAIDWLSMCYMLTYIPLLLPVAWLLEK) form a helical membrane-spanning segment. The Cytoplasmic segment spans residues 148–149 (FG). A helical transmembrane segment spans residues 150-169 (LRTIALTGSALNCLGAWVKL). The Extracellular portion of the chain corresponds to 170–176 (GSLKPHL). A helical membrane pass occupies residues 177–205 (FPVTVVGQLICSVAQVFILGMPSRIASVW). Choline is bound by residues Gln-191 and Leu-195. Residues 206 to 210 (FGANE) are Cytoplasmic-facing. The chain crosses the membrane as a helical span at residues 211-236 (VSTACSVAVFGNQLGIAIGFLVPPVL). Residues 237 to 241 (VPNIE) lie on the Extracellular side of the membrane. Residues 242–271 (DRDELAYHISIMFYIIGGVATLLLILVIIV) form a helical membrane-spanning segment. At 272–307 (FKEKPKYPPSRAQSLSYALTSPDASYLGSIARLFKN) the chain is on the cytoplasmic side. A helical transmembrane segment spans residues 308–338 (LNFVLLVITYGLNAGAFYALSTLLNRMVIWH). Residue Tyr-325 participates in choline binding. Over 339–342 (YPGE) the chain is Extracellular. Residues 343 to 371 (EVNAGRIGLTIVIAGMLGAVISGIWLDRS) form a helical membrane-spanning segment. Over 372-373 (KT) the chain is Cytoplasmic. Residues 374–396 (YKETTLVVYIMTLVGMVVYTFTL) traverse the membrane as a helical segment. Over 397–399 (NLG) the chain is Extracellular. A helical transmembrane segment spans residues 400–429 (HLWVVFITAGTMGFFMTGYLPLGFEFAVEL). The Cytoplasmic portion of the chain corresponds to 430 to 437 (TYPESEGI). Residues 438–463 (SSGLLNISAQVFGIIFTISQGQIIDN) form a helical membrane-spanning segment. Residue Gln-447 participates in choline binding. At 464–465 (YG) the chain is on the extracellular side. The chain crosses the membrane as a helical span at residues 466–488 (TKPGNIFLCVFLTLGAALTAFIK). The Cytoplasmic portion of the chain corresponds to 489–526 (ADLRRQKANKETLENKLQEEEEESNTSKVPTAVSEDHL). The tract at residues 500–526 (TLENKLQEEEEESNTSKVPTAVSEDHL) is disordered. Position 515 is a phosphoserine (Ser-515).

This sequence belongs to the major facilitator superfamily. Feline leukemia virus subgroup C receptor (TC 2.A.1.28.1) family. In terms of assembly, interacts with components of electron transfer chain complexes III, IV and V including CYC1, NDUFA4, COX4I1, ATP5PD and ATP5F1C; these interactions occur in the absence of heme and are disrupted upon heme binding. Interacts with ATP2A2; this interaction occurs in the absence of heme and promotes ATP2A2 proteasomal degradation; the complex is dissociated upon heme binding. Interacts with HMOX1; this interaction is potentiated in the presence of heme. Expressed in non-hematopoietic tissues, with relative abundant expression in brain, placenta, lung, liver and kidney. Also expressed in hematopoietic tissues (fetal liver, spleen, lymph node, thymus, leukocytes and bone marrow). Found in acidophil cells of the pituitary that secrete growth hormone and prolactin (at protein level).

It localises to the cell membrane. The protein localises to the mitochondrion membrane. Its subcellular location is the endoplasmic reticulum membrane. It carries out the reaction choline(out) = choline(in). It catalyses the reaction ethanolamine(in) = ethanolamine(out). The catalysed reaction is heme b(in) = heme b(out). Its function is as follows. Choline uniporter that specifically mediates choline uptake at the blood-brain-barrier. Responsible for the majority of choline uptake across the blood-brain-barrier from the circulation into the brain. Choline, a nutrient critical for brain development, is a precursor of phosphatidylcholine, as well as betaine. Also mediates transport of ethanolamine. Choline and ethanolamine transport is not coupled with proton transport and is exclusively driven by the choline gradient across the plasma membrane. However, the presence of an inwardly directed proton gradient enhances choline uptake. Also acts as a heme b transporter. Required to regulate mitochondrial respiration processes, ATP synthesis and thermogenesis. At low heme levels, interacts with components of electron transfer chain (ETC) complexes and ATP2A2, leading to ubiquitin-mediated degradation of ATP2A2 and inhibition of thermogenesis. Upon heme binding, dissociates from ETC complexes to allow switching from mitochondrial ATP synthesis to thermogenesis. In Homo sapiens (Human), this protein is Choline/ethanolamine transporter FLVCR2.